The sequence spans 212 residues: ER lumen protein-retaining receptor 1 (212 aa).

Residues 1-4 (MNLF) lie on the Lumenal side of the membrane. The chain crosses the membrane as a helical span at residues 5–24 (RFLGDLSHLLAIILLLLKIW). Residues 25-32 (KSRSCAGI) are Cytoplasmic-facing. A helical membrane pass occupies residues 33–52 (SGKSQVLFAVVFTARYLDLF). An interaction with the K-D-E-L motif on target proteins region spans residues 47–48 (RY). The Lumenal portion of the chain corresponds to 53 to 58 (TNYISL). The chain crosses the membrane as a helical span at residues 59-79 (YNTCMKVVYIACSFTTVWLIY). Topologically, residues 80 to 92 (SKFKATYDGNHDT) are cytoplasmic. The helical transmembrane segment at 93 to 110 (FRVEFLVVPTAILAFLVN) threads the bilayer. Residues 111-116 (HDFTPL) lie on the Lumenal side of the membrane. Residues 117–135 (EILWTFSIYLESVAILPQL) traverse the membrane as a helical segment. Over 136-149 (FMVSKTGEAETITS) the chain is Cytoplasmic. Residues 150 to 168 (HYLFALGVYRTLYLFNWIW) form a helical membrane-spanning segment. The tract at residues 159-169 (RTLYLFNWIWR) is interaction with the K-D-E-L motif on target proteins. Residues 169-178 (RYHFEGFFDL) lie on the Lumenal side of the membrane. A helical membrane pass occupies residues 179–199 (IAIVAGLVQTVLYCDFFYLYI). Residues 200–212 (TKVLKGKKLSLPA) lie on the Cytoplasmic side of the membrane. Residues 204–207 (KGKK) are important for recycling of cargo proteins with the sequence motif K-D-E-L from the Golgi to the endoplasmic reticulum. Ser209 carries the post-translational modification Phosphoserine; by PKA.

The protein belongs to the ERD2 family. Upon ligand binding the receptor oligomerizes and interacts with components of the transport machinery such as ARFGAP1 and ARF1. In terms of processing, phosphorylation by PKA at Ser-209 is required for endoplasmic reticulum retention function.

The protein resides in the golgi apparatus membrane. The protein localises to the cytoplasmic vesicle. Its subcellular location is the COPI-coated vesicle membrane. It is found in the endoplasmic reticulum membrane. It localises to the endoplasmic reticulum-Golgi intermediate compartment membrane. Receptor for the C-terminal sequence motif K-D-E-L that is present on endoplasmic reticulum resident proteins and that mediates their recycling from the Golgi back to the endoplasmic reticulum. The polypeptide is ER lumen protein-retaining receptor 1 (KDELR1) (Homo sapiens (Human)).